The sequence spans 267 residues: C-type lectin domain family 12 member A (267 aa).

Residues 1–43 lie on the Cytoplasmic side of the membrane; the sequence is MSEEIVYANLKIQDPDKKEETQKSDKCGGKVSADASHSQQKTV. An ITIM motif motif is present at residues 5 to 10; sequence IVYANL. Position 7 is a phosphotyrosine (Tyr-7). A helical; Signal-anchor for type II membrane protein membrane pass occupies residues 44–64; the sequence is LILILLCLLLFIGMGVLGGIF. The Extracellular portion of the chain corresponds to 65–267; it reads YTTLATEMIK…VLNGLPEDSR (203 aa). N-linked (GlcNAc...) asparagine glycans are attached at residues Asn-98 and Asn-105. 4 cysteine pairs are disulfide-bonded: Cys-118/Cys-130, Cys-133/Cys-144, Cys-161/Cys-246, and Cys-225/Cys-238. Residues 140–247 form the C-type lectin domain; sequence YKDSCYSQLN…CTDENNIICE (108 aa). Asn-165 carries N-linked (GlcNAc...) asparagine glycosylation.

As to quaternary structure, homodimer; disulfide-linked. Interacts (when the ITIM motif is phosphorylated) with PTPN6 and PTPN11. Phosphorylated at Tyr-7 by SRC in the ITIM motif following ligand-binding, promoting recruitment of tyrosine-protein phosphatases PTPN6 and PTPN11. As to expression, mainly expressed in lymphoid tissues. Preferentially expressed in peripheral blood leukocytes; less frequent in thymus, spleen, heart, brain and lung; and undetectable in other tissues.

It is found in the cell membrane. Myeloid inhibitory C-type lectin receptor that acts as a negative regulator of myeloid cell activation. Myeloid cell inhibition is required to limit proinflammatory pathways and protect against excessive inflammation. Specifically recognizes and binds various structures, such as neutrophil extracellular traps (NETs) or monosodium urate crystals. Also acts as a pattern-recognition receptor for pathogen-associated molecules, such as plasmodium hemozoin or mycobacterial micolic acid. Ligand-binding induces phosphorylation of its ITIM motif, followed by recruitment of tyrosine-protein phosphatases PTPN6 and PTPN11, which counteract tyrosine-protein kinase SYK, thereby preventing myeloid cell activation. Acts as a pattern-recognition receptor for NETs in neutrophils: specifically recognizes DNA in NETs, leading to inhibit neutrophil activation and limit further NET formation. This regulation is essential for controlling key neutrophil responses and limit NET-mediated inflammatory conditions. Also recognizes dead cells by acting as a receptor for monosodium urate crystals, leading to down-regulate neutrophil activation. Binding to monosodium urate crystals also promotes the type I interferon response. Acts as an inhibitor of natural killer (NK) cell cytotoxicity. Also acts as an ihibitor of dendritic cell maturation in an IL10-dependent manner. The polypeptide is C-type lectin domain family 12 member A (Mus musculus (Mouse)).